Consider the following 174-residue polypeptide: NADH-quinone oxidoreductase subunit B 1 (174 aa).

Cys-38, Cys-39, Cys-104, and Cys-133 together coordinate [4Fe-4S] cluster.

It belongs to the complex I 20 kDa subunit family. In terms of assembly, NDH-1 is composed of 14 different subunits. Subunits NuoB, C, D, E, F, and G constitute the peripheral sector of the complex. [4Fe-4S] cluster serves as cofactor.

Its subcellular location is the cell membrane. The catalysed reaction is a quinone + NADH + 5 H(+)(in) = a quinol + NAD(+) + 4 H(+)(out). NDH-1 shuttles electrons from NADH, via FMN and iron-sulfur (Fe-S) centers, to quinones in the respiratory chain. The immediate electron acceptor for the enzyme in this species is believed to be ubiquinone. Couples the redox reaction to proton translocation (for every two electrons transferred, four hydrogen ions are translocated across the cytoplasmic membrane), and thus conserves the redox energy in a proton gradient. The chain is NADH-quinone oxidoreductase subunit B 1 from Chloroflexus aggregans (strain MD-66 / DSM 9485).